The following is a 246-amino-acid chain: Alpha-tubulin N-acetyltransferase (246 aa).

The N-acetyltransferase domain occupies 21–202 (LTLVPDGVSR…NNFVVFHSFF (182 aa)). Residues 135 to 148 (FYVDESCQRQGYGK) and 172 to 181 (SNKLLGFLRK) contribute to the acetyl-CoA site.

Belongs to the acetyltransferase ATAT1 family.

It carries out the reaction L-lysyl-[alpha-tubulin] + acetyl-CoA = N(6)-acetyl-L-lysyl-[alpha-tubulin] + CoA + H(+). Its function is as follows. Specifically acetylates 'Lys-40' in alpha-tubulin on the lumenal side of microtubules. Promotes microtubule destabilization and accelerates microtubule dynamics; this activity may be independent of acetylation activity. Acetylates alpha-tubulin with a slow enzymatic rate, due to a catalytic site that is not optimized for acetyl transfer. Enters the microtubule through each end and diffuses quickly throughout the lumen of microtubules. Acetylates only long/old microtubules because of its slow acetylation rate since it does not have time to act on dynamically unstable microtubules before the enzyme is released. The protein is Alpha-tubulin N-acetyltransferase of Leishmania major.